Here is a 622-residue protein sequence, read N- to C-terminus: MAFNFNWSPLMADAGFYTRAQELLTAALNKSPKPPIIVDDIVVTELNLGSNPPELEILEIGDLAEDRFRGIFKMSYAGDAFLTLKTCVQANPLNTYLLTRHPFASPQPLAAATGLTIPLQITLSDIKLSGFVILVFSKQKGITVVFRNDPLESLKVSSTFDSIPFVRDYLQKEIEGQLRILFMDELPAIIHRLSLRLWGTEYSELETTSAQVTNPPLEGPGLDPLLNPPEDPVDASGNVLSTSEIASLSLDSGVEMHSLFSRKNVLRLAALTDSQRTLSLFTPSIQEVVFRAWTGLMEQADGPSGLVSPMSPPLSRTHSHVATSSLSLQDAASLASSSHSRLSLPSTGFSGYGLSMGAGRHSKAHARKRKKRVVDLRRRPKNTDDMESVSGESEFTESTSAASVFSGSTIPEENNDDPVTPPGSPPRTIRQPTLCDRIVARNGAERNARRGIPAEFGHDIPASRTTLPTANDIARMLATTSSLQQQLHPANSKSLPPQVPPQEPALRPSLTSNSPYPIEKPNASNYTSSGDSQQQQQQQQQHQTHLPSSLIMEAAQSGGILEQAWMMKMASEIARRIQDEKMGGEDAAGSSNNKNDNKNNNTGGFWEQSLMRSHTPPPAYRH.

In terms of domain architecture, SMP-LTD spans 1 to 195 (MAFNFNWSPL…LPAIIHRLSL (195 aa)). Disordered stretches follow at residues 211 to 234 (QVTNPPLEGPGLDPLLNPPEDPVD), 303 to 322 (PSGLVSPMSPPLSRTHSHVA), 355 to 432 (SMGA…IRQP), 445 to 464 (ERNARRGIPAEFGHDIPASR), 482 to 546 (SLQQ…QTHL), and 581 to 622 (KMGG…AYRH). Over residues 214 to 225 (NPPLEGPGLDPL) the composition is skewed to low complexity. Basic residues predominate over residues 360 to 372 (RHSKAHARKRKKR). The span at 373-384 (VVDLRRRPKNTD) shows a compositional bias: basic and acidic residues. Low complexity predominate over residues 388 to 404 (SVSGESEFTESTSAASV). 2 stretches are compositionally biased toward polar residues: residues 482 to 495 (SLQQQLHPANSKSL) and 522 to 532 (NASNYTSSGDS). Low complexity-rich tracts occupy residues 533-543 (QQQQQQQQQHQ) and 592-601 (NNKNDNKNNN).

It belongs to the MDM34 family. Component of the ER-mitochondria encounter structure (ERMES) or MDM complex, composed of MMM1, MDM10, MDM12 and MDM34.

It is found in the mitochondrion outer membrane. Functionally, component of the ERMES/MDM complex, which serves as a molecular tether to connect the endoplasmic reticulum (ER) and mitochondria. Components of this complex are involved in the control of mitochondrial shape and protein biogenesis, and function in nonvesicular lipid trafficking between the ER and mitochondria. MDM34 is required for the interaction of the ER-resident membrane protein MMM1 and the outer mitochondrial membrane-resident beta-barrel protein MDM10. This Ajellomyces capsulatus (strain G186AR / H82 / ATCC MYA-2454 / RMSCC 2432) (Darling's disease fungus) protein is Mitochondrial distribution and morphology protein 34.